Reading from the N-terminus, the 200-residue chain is Riboflavin synthase (200 aa).

Lumazine-binding repeat units lie at residues 1-97 (MFSG…IGGH) and 98-190 (LLSG…VDTV). 2,4-dihydroxypteridine contacts are provided by residues 4–6 (GII), 48–50 (CLT), 62–67 (DVIPET), 101–103 (GHV), Lys-132, 141–143 (SLT), and 155–160 (GLIPET).

As to quaternary structure, homotrimer.

It catalyses the reaction 2 6,7-dimethyl-8-(1-D-ribityl)lumazine + H(+) = 5-amino-6-(D-ribitylamino)uracil + riboflavin. The protein operates within cofactor biosynthesis; riboflavin biosynthesis; riboflavin from 2-hydroxy-3-oxobutyl phosphate and 5-amino-6-(D-ribitylamino)uracil: step 2/2. Functionally, catalyzes the dismutation of two molecules of 6,7-dimethyl-8-ribityllumazine, resulting in the formation of riboflavin and 5-amino-6-(D-ribitylamino)uracil. In Chlamydia pneumoniae (Chlamydophila pneumoniae), this protein is Riboflavin synthase (ribE).